Consider the following 875-residue polypeptide: Kelch-like protein 29 (875 aa).

Residues 115-126 are compositionally biased toward polar residues; the sequence is WGQTPINQSTPW. Disordered stretches follow at residues 115-145 and 248-291; these read WGQTPINQSTPWDTDEPPSKQMRESDNPGTG and GPTA…DSAH. Residues 131–140 are compositionally biased toward basic and acidic residues; that stretch reads PPSKQMRESD. The BTB domain maps to 329–401; the sequence is TDLKIVVEGR…VYTGSLVIDS (73 aa). 6 Kelch repeats span residues 585-635, 637-683, 684-730, 732-778, 779-821, and 822-870; these read VIVL…VSAG, NIYL…VYDG, KIYT…VCGG, IYVF…TLNG, FVFI…VLDG, and KIYA…VIKK.

The protein is Kelch-like protein 29 (KLHL29) of Homo sapiens (Human).